The following is a 272-amino-acid chain: Shikimate dehydrogenase (NADP(+)) (272 aa).

Residues 14-16 (SKS) and Thr-61 each bind shikimate. The active-site Proton acceptor is the Lys-65. Glu-77 provides a ligand contact to NADP(+). Positions 86 and 102 each coordinate shikimate. NADP(+)-binding positions include 126 to 130 (GAGGA), 149 to 154 (NRTVSR), and Met-213. Position 215 (Tyr-215) interacts with shikimate. Position 237 (Gly-237) interacts with NADP(+).

Belongs to the shikimate dehydrogenase family. In terms of assembly, homodimer.

The enzyme catalyses shikimate + NADP(+) = 3-dehydroshikimate + NADPH + H(+). It functions in the pathway metabolic intermediate biosynthesis; chorismate biosynthesis; chorismate from D-erythrose 4-phosphate and phosphoenolpyruvate: step 4/7. In terms of biological role, involved in the biosynthesis of the chorismate, which leads to the biosynthesis of aromatic amino acids. Catalyzes the reversible NADPH linked reduction of 3-dehydroshikimate (DHSA) to yield shikimate (SA). This is Shikimate dehydrogenase (NADP(+)) from Shigella boydii serotype 18 (strain CDC 3083-94 / BS512).